The primary structure comprises 289 residues: ATP synthase gamma chain (289 aa).

This sequence belongs to the ATPase gamma chain family. As to quaternary structure, F-type ATPases have 2 components, CF(1) - the catalytic core - and CF(0) - the membrane proton channel. CF(1) has five subunits: alpha(3), beta(3), gamma(1), delta(1), epsilon(1). CF(0) has three main subunits: a, b and c.

It is found in the cell membrane. Its function is as follows. Produces ATP from ADP in the presence of a proton gradient across the membrane. The gamma chain is believed to be important in regulating ATPase activity and the flow of protons through the CF(0) complex. This Hamiltonella defensa subsp. Acyrthosiphon pisum (strain 5AT) protein is ATP synthase gamma chain.